The primary structure comprises 310 residues: MLPLSISTSPDPASQFPTVPDLPTLTPTPSPTSGTAKMNEFTISNLCPEASDRLSLEVSPSSTGLLEPKSSTVSPAPSCTGYPIFDLTGISKQSSSGVSSTRTSSLEPKSSAVSPAPSSPEASNPNKRPAYSYNALIAMAIQNSPFKALRLSEIYAYISNNFPYYKMENGGWQNSIRHNLSLREEFYKVQTTDGKGSFWAMNTQLGSDVYIGKDCGSLRRKKNGKPRKYSKRSNTVSNPNPIPQIPSFTPSPLLATPFPLFLYISQAYAQNPNLLPMMLQNFQHFNFQNIPALSFPFPFSNSNGNPNSRN.

Polar residues predominate over residues 1–16 (MLPLSISTSPDPASQF). Disordered regions lie at residues 1 to 37 (MLPL…GTAK), 58 to 77 (VSPS…SPAP), 92 to 126 (KQSS…SNPN), and 217 to 242 (SLRR…PNPI). A compositionally biased stretch (low complexity) spans 17 to 35 (PTVPDLPTLTPTPSPTSGT). The fork-head DNA-binding region spans 128 to 220 (RPAYSYNALI…IGKDCGSLRR (93 aa)). Positions 218 to 231 (LRRKKNGKPRKYSK) are enriched in basic residues.

The protein localises to the nucleus. It localises to the cytoplasm. Functionally, transcription factor. Plays a role in embryogenesis and later development, perhaps acting redundantly with forkhead protein fkh-2. The protein is Forkhead box protein pes-1 of Caenorhabditis briggsae.